The sequence spans 413 residues: MKFYLVGGAVRDNLLKLPIKDRDYMVVGAAPEQMFELGYKQVGKDFPVFLHPKTQQEYALARTERKTGSGYGGFSCDASPDVTLEEDLLRRDLTINAIAQDDKGELFDPYGGIKDIESKMLRHVSDAFVEDPLRVLRVARFAARFHHLGFTVADETLALMTKISQSGELEALTSERVFLELDKALSTQNPQIFIEVLNQCQALEILFPEIHALFGVPQPEKWHPEIDTGIHTLMVLAQAAKLSDENSVRFAALVHDLGKALSPKATLPKHHGHGQSGLALIKVLCARAKVPNEYRDLALLVSDQHQNVHNIRELRPETLIKIFDKADLWRKPDRLEQLATACEADSKGRLGLENSPYPQADYLRESFQVANSVAVKPIIEAGFKGAEIKEQLKLKRIEIVTEFKRNFNESAIE.

The ATP site is built by G8 and R11. Residues G8 and R11 each coordinate CTP. The Mg(2+) site is built by D21 and D23. R91, R137, and R140 together coordinate ATP. The CTP site is built by R91, R137, and R140. The HD domain maps to 228 to 329 (TGIHTLMVLA…IKIFDKADLW (102 aa)).

The protein belongs to the tRNA nucleotidyltransferase/poly(A) polymerase family. Bacterial CCA-adding enzyme type 1 subfamily. In terms of assembly, monomer. Can also form homodimers and oligomers. Mg(2+) is required as a cofactor. Requires Ni(2+) as cofactor.

The enzyme catalyses a tRNA precursor + 2 CTP + ATP = a tRNA with a 3' CCA end + 3 diphosphate. It carries out the reaction a tRNA with a 3' CCA end + 2 CTP + ATP = a tRNA with a 3' CCACCA end + 3 diphosphate. Functionally, catalyzes the addition and repair of the essential 3'-terminal CCA sequence in tRNAs without using a nucleic acid template. Adds these three nucleotides in the order of C, C, and A to the tRNA nucleotide-73, using CTP and ATP as substrates and producing inorganic pyrophosphate. tRNA 3'-terminal CCA addition is required both for tRNA processing and repair. Also involved in tRNA surveillance by mediating tandem CCA addition to generate a CCACCA at the 3' terminus of unstable tRNAs. While stable tRNAs receive only 3'-terminal CCA, unstable tRNAs are marked with CCACCA and rapidly degraded. This is Multifunctional CCA protein from Shewanella woodyi (strain ATCC 51908 / MS32).